Consider the following 595-residue polypeptide: DNA-binding protein REB1 (595 aa).

2 stretches are compositionally biased toward basic and acidic residues: residues 25 to 46 (KSGEDDAVNKQKSVDWFLKEQD) and 54 to 71 (DPGRDQDQEDNAKHRDAN). The tract at residues 25–208 (KSGEDDAVNK…IDDHVDDVSV (184 aa)) is disordered. A compositionally biased stretch (low complexity) spans 75 to 84 (AVAAAAVAAA). Residues 114 to 123 (KKSKKNKNKL) show a composition bias toward basic residues. A compositionally biased stretch (polar residues) spans 163-176 (NIASQHPDFQQYLN). A compositionally biased stretch (basic and acidic residues) spans 182-205 (EPKKEKSEERSYGDLSNIDDHVDD). In terms of domain architecture, HTH myb-type spans 333 to 384 (HIFEQRGKWTPEEDAELARWCAEKEGQWSNIGKVLGRMPEDCRDRWRNYVKC). The H-T-H motif DNA-binding region spans 360-382 (WSNIGKVLGRMPEDCRDRWRNYV). The region spanning 385–490 (GPNRAANKWS…QCRYKWNKLL (106 aa)) is the Myb-like domain. Residues 414–456 (TAYEDGEDDEMKDSSTKIEDSGDADMLDVQDSDKKPSISNSKK) form a disordered region. A compositionally biased stretch (acidic residues) spans 434-443 (SGDADMLDVQ).

It is found in the nucleus. Functionally, DNA-binding protein that recognizes sites within both the enhancer and the promoter of rRNA transcription, as well as upstream of many genes transcribed by RNA polymerase II. It is essential for cell growth. May stimulate or inhibit transcription. Specifically recognizes the sequence 5'-CCGGGTA-3' or 5'-CGGGTRR-3' (where R is any purine). The protein is DNA-binding protein REB1 (REB1) of Kluyveromyces lactis (strain ATCC 8585 / CBS 2359 / DSM 70799 / NBRC 1267 / NRRL Y-1140 / WM37) (Yeast).